The primary structure comprises 217 residues: Ribonuclease T (217 aa).

Positions 20-195 constitute an Exonuclease domain; the sequence is VVVDVETAGF…YDTEKTAELF (176 aa). Mg(2+) contacts are provided by aspartate 23, glutamate 25, histidine 182, and aspartate 187. The active-site Proton donor/acceptor is histidine 182.

Belongs to the RNase T family. Homodimer. Mg(2+) serves as cofactor.

Functionally, trims short 3' overhangs of a variety of RNA species, leaving a one or two nucleotide 3' overhang. Responsible for the end-turnover of tRNA: specifically removes the terminal AMP residue from uncharged tRNA (tRNA-C-C-A). Also appears to be involved in tRNA biosynthesis. The chain is Ribonuclease T from Vibrio vulnificus (strain CMCP6).